A 121-amino-acid polypeptide reads, in one-letter code: Small ribosomal subunit protein uS11c (121 aa).

This sequence belongs to the universal ribosomal protein uS11 family. Part of the 30S ribosomal subunit.

It is found in the plastid. It localises to the chloroplast. In Cyanidioschyzon merolae (strain NIES-3377 / 10D) (Unicellular red alga), this protein is Small ribosomal subunit protein uS11c.